Reading from the N-terminus, the 164-residue chain is SsrA-binding protein (164 aa).

Belongs to the SmpB family.

It is found in the cytoplasm. In terms of biological role, required for rescue of stalled ribosomes mediated by trans-translation. Binds to transfer-messenger RNA (tmRNA), required for stable association of tmRNA with ribosomes. tmRNA and SmpB together mimic tRNA shape, replacing the anticodon stem-loop with SmpB. tmRNA is encoded by the ssrA gene; the 2 termini fold to resemble tRNA(Ala) and it encodes a 'tag peptide', a short internal open reading frame. During trans-translation Ala-aminoacylated tmRNA acts like a tRNA, entering the A-site of stalled ribosomes, displacing the stalled mRNA. The ribosome then switches to translate the ORF on the tmRNA; the nascent peptide is terminated with the 'tag peptide' encoded by the tmRNA and targeted for degradation. The ribosome is freed to recommence translation, which seems to be the essential function of trans-translation. This chain is SsrA-binding protein, found in Shewanella woodyi (strain ATCC 51908 / MS32).